The chain runs to 236 residues: MKSVSELLYHWLGESPVPYMEGWELQRQLHKRRVADQVPDTVLLLEHEPVYTAGKRTGPWDRPLTDPGAPVIDIDRGGKITWHGPGQLTAYPIVKLPAPLDVVAYVRMLEEAIIRVIGDFGLSGMRVEGRTGVWLAAAPDRGLPERKIAAIGCRIAKGVTMHGFALNCNNDLSWFDRIVPCGIRDAGVTSLTAELDRTVGVGDILEATEHHLAAVLGASSYRRIAGWPVLPEFVDA.

Positions aspartate 36–serine 220 constitute a BPL/LPL catalytic domain. Residues arginine 76–histidine 83, alanine 150–glycine 152, and glycine 163–alanine 165 each bind substrate. Catalysis depends on cysteine 181, which acts as the Acyl-thioester intermediate.

Belongs to the LipB family.

The protein localises to the cytoplasm. It carries out the reaction octanoyl-[ACP] + L-lysyl-[protein] = N(6)-octanoyl-L-lysyl-[protein] + holo-[ACP] + H(+). The protein operates within protein modification; protein lipoylation via endogenous pathway; protein N(6)-(lipoyl)lysine from octanoyl-[acyl-carrier-protein]: step 1/2. Catalyzes the transfer of endogenously produced octanoic acid from octanoyl-acyl-carrier-protein onto the lipoyl domains of lipoate-dependent enzymes. Lipoyl-ACP can also act as a substrate although octanoyl-ACP is likely to be the physiological substrate. In Thermobifida fusca (strain YX), this protein is Octanoyltransferase.